A 287-amino-acid polypeptide reads, in one-letter code: 4-hydroxybenzoate octaprenyltransferase (287 aa).

A run of 5 helical transmembrane segments spans residues Phe-35–Val-55, Leu-96–Val-116, Ile-211–Gly-231, Ile-235–Tyr-255, and Cys-262–Leu-282.

Belongs to the UbiA prenyltransferase family. Requires Mg(2+) as cofactor.

The protein resides in the cell inner membrane. The catalysed reaction is all-trans-octaprenyl diphosphate + 4-hydroxybenzoate = 4-hydroxy-3-(all-trans-octaprenyl)benzoate + diphosphate. Its pathway is cofactor biosynthesis; ubiquinone biosynthesis. Functionally, catalyzes the prenylation of para-hydroxybenzoate (PHB) with an all-trans polyprenyl group. Mediates the second step in the final reaction sequence of ubiquinone-8 (UQ-8) biosynthesis, which is the condensation of the polyisoprenoid side chain with PHB, generating the first membrane-bound Q intermediate 3-octaprenyl-4-hydroxybenzoate. In Shewanella halifaxensis (strain HAW-EB4), this protein is 4-hydroxybenzoate octaprenyltransferase.